The primary structure comprises 112 residues: MSSNVTLVDKLNPIRHKELKVKIDEICHKSLKNLKNTSKILIEEKKHPISSTKVSINYIENENENKNNLINLENFYKKYLLKFNDFIMKKKLFLNPLLSPLLKVLPTIHSIY.

This sequence to Buchnera BU585.

This is an uncharacterized protein from Buchnera aphidicola subsp. Schizaphis graminum (strain Sg).